The primary structure comprises 596 residues: MSSRYSLRQTPRKKELFEGMVETPIRRSRSARRQTSQPLSDVETDSTVEILPQPTEVLPQPTRRRTARFKEELDSDTDSDNMGAVNRAANGKTNGHANGNGNGYTNGHGNGNGHATNGHATSNGAAPIQAVIEKTKGVSHDPHVVDGWRPGQDPKVDYSGEVEFGGSFGTAAMMTLFPVLMWYMWIGATYYDGKFPSRTEGQSWSEFGAHLANLVYTGAFPRLQVWAWYWSYLIVEGAFYCLLPGVWGYGKPLPHEGGKQLPYYCNAYWSLYTTLACLAGLHYSGIWPLYTAVDEFGPLLSVAILSGFLVSIVAYFSALWRGKQHRMTGYPIYDFFMGAELNPRMFGILDFKMFFEVRMPWYILLILSLGTAARQHEQYGYVSGEVWFLVMAHFLYANACAKGEELIITTWDMYYEKWGFMLIFWNLAGVPLSYCHCTIYLANHHPDVYRWNRGILAAMFVGYLFWYWVWDSCNSQKNRFRAMEKGKLVLRNTFPQVPWQTIHNPKTIVSPQGTILVDGWYGLARKIHYTADVWFAVSWGLITGFESPFPWFYPVFFCCMIAHRAARDIHRCRRKYGDAWLEYERRVPYLFIPYVI.

Residues 1 to 122 (MSSRYSLRQT…GHATNGHATS (122 aa)) are disordered. Positions 98–112 (NGNGNGYTNGHGNGN) are enriched in gly residues. The next 8 helical transmembrane spans lie at 168–188 (FGTA…WIGA), 225–245 (VWAW…LLPG), 269–289 (WSLY…IWPL), 296–316 (FGPL…VAYF), 353–373 (MFFE…GTAA), 381–401 (YVSG…NACA), 419–439 (GFML…HCTI), and 454–474 (GILA…DSCN). Residues Lys-477, Arg-481, Leu-516, and 528 to 529 (HY) each bind NADP(+). The chain crosses the membrane as a helical span at residues 535–557 (FAVSWGLITGFESPFPWFYPVFF). NADP(+) is bound by residues Asp-568, 572–576 (CRRKY), and Tyr-583.

This sequence belongs to the ERG4/ERG24 family.

The protein resides in the endoplasmic reticulum membrane. It catalyses the reaction ergosterol + NADP(+) = ergosta-5,7,22,24(28)-tetraen-3beta-ol + NADPH + H(+). It participates in steroid metabolism; ergosterol biosynthesis. In terms of biological role, delta(24(24(1)))-sterol reductase; part of the third module of ergosterol biosynthesis pathway that includes the late steps of the pathway. ERG4 catalyzes the last step of ergosterol biosynthesis by converting ergosta-5,7,22,24(28)-tetraen-3beta-ol into ergosterol. The third module or late pathway involves the ergosterol synthesis itself through consecutive reactions that mainly occur in the endoplasmic reticulum (ER) membrane. Firstly, the squalene synthase ERG9 catalyzes the condensation of 2 farnesyl pyrophosphate moieties to form squalene, which is the precursor of all steroids. Squalene synthase is crucial for balancing the incorporation of farnesyl diphosphate (FPP) into sterol and nonsterol isoprene synthesis. Secondly, squalene is converted into lanosterol by the consecutive action of the squalene epoxidase ERG1 and the lanosterol synthase ERG7. Then, the delta(24)-sterol C-methyltransferase ERG6 methylates lanosterol at C-24 to produce eburicol. Eburicol is the substrate of the sterol 14-alpha demethylase encoded by CYP51A, CYP51B and CYP51C, to yield 4,4,24-trimethyl ergosta-8,14,24(28)-trienol. CYP51B encodes the enzyme primarily responsible for sterol 14-alpha-demethylation, and plays an essential role in ascospore formation. CYP51A encodes an additional sterol 14-alpha-demethylase, induced on ergosterol depletion and responsible for the intrinsic variation in azole sensitivity. The third CYP51 isoform, CYP51C, does not encode a sterol 14-alpha-demethylase, but is required for full virulence on host wheat ears. The C-14 reductase ERG24 then reduces the C14=C15 double bond which leads to 4,4-dimethylfecosterol. A sequence of further demethylations at C-4, involving the C-4 demethylation complex containing the C-4 methylsterol oxidases ERG25, the sterol-4-alpha-carboxylate 3-dehydrogenase ERG26 and the 3-keto-steroid reductase ERG27, leads to the production of fecosterol via 4-methylfecosterol. ERG28 has a role as a scaffold to help anchor ERG25, ERG26 and ERG27 to the endoplasmic reticulum. The C-8 sterol isomerase ERG2 then catalyzes the reaction which results in unsaturation at C-7 in the B ring of sterols and thus converts fecosterol to episterol. The sterol-C5-desaturases ERG3A and ERG3BB then catalyze the introduction of a C-5 double bond in the B ring to produce 5-dehydroepisterol. The C-22 sterol desaturases ERG5A and ERG5B further convert 5-dehydroepisterol into ergosta-5,7,22,24(28)-tetraen-3beta-ol by forming the C-22(23) double bond in the sterol side chain. Finally, ergosta-5,7,22,24(28)-tetraen-3beta-ol is substrate of the C-24(28) sterol reductase ERG4 to produce ergosterol. In Gibberella zeae (strain ATCC MYA-4620 / CBS 123657 / FGSC 9075 / NRRL 31084 / PH-1) (Wheat head blight fungus), this protein is Delta(24(24(1)))-sterol reductase.